The chain runs to 230 residues: MPALFVTGTGTDIGKTHVSCALIRALKVRGAVVDAFKPVVSGFDPKDAAGSDPARLAIALGDPSAVFRIAPRRYRAPLSPNIAAQLEGETLVLDDMVIDAVARAAELRDGLLLVEGAGGVMSPLTDTQTNLDMIVALGAPVLLVAGSYLGTISHVLTALVALRAAKVRVAAVVISESLDAPDLDQTAQALAPFLDGAPLFLAPRGESWDAGALADHLLAAVAPNAFGGTP.

12 to 17 (DIGKTH) is a binding site for ATP. T16 contacts Mg(2+). K37 is an active-site residue. S41 lines the substrate pocket. Residues D52, 115 to 118 (EGAG), and 175 to 176 (SE) contribute to the ATP site. Mg(2+) is bound by residues D52 and E115.

The protein belongs to the dethiobiotin synthetase family. Homodimer. Mg(2+) is required as a cofactor.

The protein resides in the cytoplasm. It catalyses the reaction (7R,8S)-7,8-diammoniononanoate + CO2 + ATP = (4R,5S)-dethiobiotin + ADP + phosphate + 3 H(+). It functions in the pathway cofactor biosynthesis; biotin biosynthesis; biotin from 7,8-diaminononanoate: step 1/2. Functionally, catalyzes a mechanistically unusual reaction, the ATP-dependent insertion of CO2 between the N7 and N8 nitrogen atoms of 7,8-diaminopelargonic acid (DAPA, also called 7,8-diammoniononanoate) to form a ureido ring. This Caulobacter sp. (strain K31) protein is ATP-dependent dethiobiotin synthetase BioD.